The following is a 394-amino-acid chain: Elongation factor Tu (394 aa).

Residues 10–204 (KPHVNIGTIG…AVDSYIPQPV (195 aa)) enclose the tr-type G domain. The interval 19–26 (GHVDHGKT) is G1. GTP is bound at residue 19–26 (GHVDHGKT). Threonine 26 is a Mg(2+) binding site. Residues 60-64 (GITIS) form a G2 region. The segment at 81–84 (DCPG) is G3. Residues 81–85 (DCPGH) and 136–139 (NKID) each bind GTP. The tract at residues 136 to 139 (NKID) is G4. The tract at residues 174 to 176 (SAL) is G5.

It belongs to the TRAFAC class translation factor GTPase superfamily. Classic translation factor GTPase family. EF-Tu/EF-1A subfamily. Monomer.

It localises to the cytoplasm. It carries out the reaction GTP + H2O = GDP + phosphate + H(+). Functionally, GTP hydrolase that promotes the GTP-dependent binding of aminoacyl-tRNA to the A-site of ribosomes during protein biosynthesis. This Rickettsia conorii (strain ATCC VR-613 / Malish 7) protein is Elongation factor Tu.